Here is a 677-residue protein sequence, read N- to C-terminus: DNA ligase (677 aa).

NAD(+) contacts are provided by residues 34-38 (DLAFD), 83-84 (SL), and Glu115. Lys117 (N6-AMP-lysine intermediate) is an active-site residue. Positions 138, 180, 297, and 321 each coordinate NAD(+). Cys416, Cys419, Cys434, and Cys439 together coordinate Zn(2+). The region spanning 596 to 677 (KKTSQLAGLT…LIKMLETEQA (82 aa)) is the BRCT domain.

Belongs to the NAD-dependent DNA ligase family. LigA subfamily. The cofactor is Mg(2+). Mn(2+) serves as cofactor.

It catalyses the reaction NAD(+) + (deoxyribonucleotide)n-3'-hydroxyl + 5'-phospho-(deoxyribonucleotide)m = (deoxyribonucleotide)n+m + AMP + beta-nicotinamide D-nucleotide.. DNA ligase that catalyzes the formation of phosphodiester linkages between 5'-phosphoryl and 3'-hydroxyl groups in double-stranded DNA using NAD as a coenzyme and as the energy source for the reaction. It is essential for DNA replication and repair of damaged DNA. The sequence is that of DNA ligase from Acidobacterium capsulatum (strain ATCC 51196 / DSM 11244 / BCRC 80197 / JCM 7670 / NBRC 15755 / NCIMB 13165 / 161).